A 257-amino-acid polypeptide reads, in one-letter code: 5'-nucleotidase SurE (257 aa).

D9, D10, S42, and N96 together coordinate a divalent metal cation.

It belongs to the SurE nucleotidase family. A divalent metal cation is required as a cofactor.

It localises to the cytoplasm. The enzyme catalyses a ribonucleoside 5'-phosphate + H2O = a ribonucleoside + phosphate. In terms of biological role, nucleotidase that shows phosphatase activity on nucleoside 5'-monophosphates. The protein is 5'-nucleotidase SurE of Campylobacter lari (strain RM2100 / D67 / ATCC BAA-1060).